The sequence spans 400 residues: Cytohesin-2 (400 aa).

A coiled-coil region spans residues 10-63 (DLTPEERMELENIRRRKQELLVEIQRLREELSEAMSEVEGLEANEGSKTLQRNR). The 130-residue stretch at 72 to 201 (FNMDPKKGIQ…VIMLNTSLHN (130 aa)) folds into the SEC7 domain. A PH domain is found at 259 to 376 (NPDREGWLLK…WIKSIQAAVS (118 aa)). A 1,2-diacyl-sn-glycero-3-phospho-(1D-myo-inositol-3,4,5-trisphosphate) is bound by residues 268–276 (KLGGGRVKT), arginine 280, tyrosine 291, arginine 301, lysine 339, asparagine 350, and histidine 351. A C-terminal autoinhibitory region region spans residues 387–395 (RKKRISVKK).

In terms of assembly, heteromer. Composed of TAMALIN, CYTH2 and at least one GRM1. Interacts with ARRB1. Interacts with ARL4D; the interaction is direct. Directly interacts with CCDC120 through the coiled coil domain; this interaction stabilizes CCDC120, possibly by preventing its ubiquitination, and is required for neurite growth in neuroblastoma cells. Interacts with ARF1. Interacts with FRMD4A. Interacts (via N-terminal domain) with INAVA (via N-terminal domain). As to expression, widely expressed.

The protein resides in the cell membrane. It is found in the cytoplasm. It localises to the cell projection. The protein localises to the growth cone. Its subcellular location is the cell junction. The protein resides in the tight junction. It is found in the adherens junction. Acts as a guanine-nucleotide exchange factor (GEF). Promotes guanine-nucleotide exchange on ARF1, ARF3 and ARF6. Activates ARF factors through replacement of GDP with GTP. The cell membrane form, in association with ARL4 proteins, recruits ARF6 to the plasma membrane. Involved in neurite growth. This Homo sapiens (Human) protein is Cytohesin-2.